The chain runs to 380 residues: Tubby-like F-box protein 9 (380 aa).

Residues 30-76 (PFSWSELPEELLREILIRVETVDGGDWPSRRNVVACAGVCRSWRILT) enclose the F-box domain. The interval 258-283 (SSRSSPVFRSHSKPLRSNSASCSDSG) is disordered. The segment covering 272-283 (LRSNSASCSDSG) has biased composition (polar residues).

Belongs to the TUB family. In terms of assembly, part of a SCF (SKP1-cullin-F-box) protein ligase complex. Interacts with SKP1A/ASK1 and XERICO. As to expression, ubiquitous.

The protein operates within protein modification; protein ubiquitination. Functionally, component of SCF(ASK-cullin-F-box) E3 ubiquitin ligase complexes, which may mediate the ubiquitination and subsequent proteasomal degradation of target proteins. Confers sensitivity to ABA during seed germination and early seedling development. This Arabidopsis thaliana (Mouse-ear cress) protein is Tubby-like F-box protein 9.